The chain runs to 696 residues: Polyribonucleotide nucleotidyltransferase (696 aa).

Mg(2+)-binding residues include Asp486 and Asp492. The 60-residue stretch at 553 to 612 (PRIIVRNIPKDRIGELIGPGGKNVRGISELTGAELYIEDDGRVTISGSNQESAEKAAKMV) folds into the KH domain. The S1 motif domain maps to 622 to 690 (GKIYEGKVKR…KTGKIDLSRK (69 aa)).

The protein belongs to the polyribonucleotide nucleotidyltransferase family. The cofactor is Mg(2+).

It is found in the cytoplasm. The catalysed reaction is RNA(n+1) + phosphate = RNA(n) + a ribonucleoside 5'-diphosphate. In terms of biological role, involved in mRNA degradation. Catalyzes the phosphorolysis of single-stranded polyribonucleotides processively in the 3'- to 5'-direction. This is Polyribonucleotide nucleotidyltransferase from Leptospira borgpetersenii serovar Hardjo-bovis (strain JB197).